Reading from the N-terminus, the 858-residue chain is Ubiquitin carboxyl-terminal hydrolase 5 (858 aa).

N-acetylalanine is present on A2. A disordered region spans residues 74–96 (RRTRRPKEEDPTTGTGDPPRKKP). K113 participates in a covalent cross-link: Glycyl lysine isopeptide (Lys-Gly) (interchain with G-Cter in SUMO). Phosphoserine occurs at positions 149 and 156. A UBP-type; degenerate zinc finger spans residues 175-283 (QVSKHAFSLK…EHLSHFGIDM (109 aa)). A disulfide bridge links C195 with C816. Residues C199 and C202 each contribute to the Zn(2+) site. W209 lines the substrate pocket. Residue C219 coordinates Zn(2+). Residue 221–224 (RRYF) participates in substrate binding. H232 serves as a coordination point for Zn(2+). Substrate is bound by residues Y259, Y261, and D264. Position 292 is a phosphothreonine (T292). The 531-residue stretch at 326–856 (TGIRNLGNSC…LGYIYFYQRV (531 aa)) folds into the USP domain. C335 (nucleophile) is an active-site residue. The residue at position 623 (T623) is a Phosphothreonine. 2 UBA domains span residues 654-695 (MLDE…VMSH) and 722-762 (PPPE…IFSH). S779, S783, and S785 each carry phosphoserine. Residue H818 is the Proton acceptor of the active site.

Belongs to the peptidase C19 family. As to quaternary structure, homodimer. Interacts with TRIML1. Ubiquitinated by SMURF1; leading to proteasomal degradation. In terms of processing, SUMOylated at Lys-113; SUMOylation affects the interaction with Cav3.2 channels.

It is found in the cytoplasm. The protein localises to the stress granule. The protein resides in the nucleus. It catalyses the reaction Thiol-dependent hydrolysis of ester, thioester, amide, peptide and isopeptide bonds formed by the C-terminal Gly of ubiquitin (a 76-residue protein attached to proteins as an intracellular targeting signal).. Functionally, deubiquitinating enzyme that participates in a wide range of cellular processes by specifically cleaving isopeptide bonds between ubiquitin and substrate proteins or ubiquitin itself. Affects thereby important cellular signaling pathways such as NF-kappa-B, Wnt/beta-catenin, and cytokine production by regulating ubiquitin-dependent protein degradation. Participates in the activation of the Wnt signaling pathway by promoting FOXM1 deubiquitination and stabilization that induces the recruitment of beta-catenin to Wnt target gene promoter. Regulates the assembly and disassembly of heat-induced stress granules by mediating the hydrolysis of unanchored ubiquitin chains. Promotes lipopolysaccharide-induced apoptosis and inflammatory response by stabilizing the TXNIP protein. Affects T-cell biology by stabilizing the inhibitory receptor on T-cells PDC1. Acts as a negative regulator of autophagy by regulating ULK1 at both protein and mRNA levels. Acts also as a negative regulator of type I interferon production by simultaneously removing both 'Lys-48'-linked unanchored and 'Lys-63'-linked anchored polyubiquitin chains on the transcription factor IRF3. Modulates the stability of DNA mismatch repair protein MLH1 and counteracts the effect of the ubiquitin ligase UBR4. Upon activation by insulin, it gets phosphorylated through mTORC1-mediated phosphorylation to enhance YTHDF1 stability by removing 'Lys-11'-linked polyubiquitination. May also deubiquitinate other substrates such as the calcium channel CACNA1H. This is Ubiquitin carboxyl-terminal hydrolase 5 (UBP5) from Pongo abelii (Sumatran orangutan).